Here is a 355-residue protein sequence, read N- to C-terminus: Neutral protease 2 homolog MEP6 (355 aa).

Residues 1 to 19 form the signal peptide; that stretch reads MRLSSSLIALVALAGQALA. The propeptide occupies 20–179; sequence LPFNELAERD…ASAIPELNKR (160 aa). Disulfide bonds link cysteine 187/cysteine 259 and cysteine 266/cysteine 283. Histidine 307 is a binding site for Zn(2+). Glutamate 308 is an active-site residue. 2 residues coordinate Zn(2+): histidine 311 and aspartate 322.

This sequence belongs to the peptidase M35 family. Requires Zn(2+) as cofactor.

The protein resides in the secreted. It catalyses the reaction Preferential cleavage of bonds with hydrophobic residues in P1'. Also 3-Asn-|-Gln-4 and 8-Gly-|-Ser-9 bonds in insulin B chain.. Functionally, secreted metalloproteinase that allows assimilation of proteinaceous substrates. Shows high activities on basic nuclear substrates such as histone and protamine. May be involved in virulence. This is Neutral protease 2 homolog MEP6 (MEP6) from Coccidioides posadasii (strain C735) (Valley fever fungus).